The primary structure comprises 341 residues: MSDPVIKCESVYKIFGSNAKKMLHEANGNVDAKTFQDNGCIVGVNNASFEVVKGEMLVVMGLSGSGKSTLLRCISRLTDATSGKIYIDGQDLLTLNNKELIELRRNKMGMVFQSFALLPHKTVVENIAFPLQIKGIKTQDSINKAMEMVKLVGLDGRENYFPRELSGGQQQRVGIARSLAVEPDIWFLDEPFSALDPLIRKEMQDEFLRLQEKLQKTIMFITHDFDEALRLADRIAIMKDGVIEQLDTPANIVLNPATEYVRKFTEEVPRGKVLKIADLMEKPETENLSDFKVSKNEIIENVAEKILTQEKSVAVTDENNKIVGSVHPSKIIHTVFSREKK.

The region spanning isoleucine 6–threonine 265 is the ABC transporter domain. An ATP-binding site is contributed by glycine 61–serine 68.

The protein belongs to the ABC transporter superfamily. The complex is probably composed of two ATP-binding proteins (TmoW), two transmembrane proteins (TmoV) and a solute-binding protein (TmoX).

It localises to the cell inner membrane. The enzyme catalyses a quaternary ammonium(out) + ATP + H2O = a quaternary ammonium(in) + ADP + phosphate + H(+). Part of the ABC transporter complex TmoXWV involved in trimethylamine N-oxide (TMAO) import. Responsible for energy coupling to the transport system. The sequence is that of Trimethylamine N-oxide transport system ATP-binding protein TmoW from Pelagibacter ubique (strain HTCC1062).